We begin with the raw amino-acid sequence, 409 residues long: Peptidase T (409 aa).

A Zn(2+)-binding site is contributed by H78. Residue D80 is part of the active site. D140 is a binding site for Zn(2+). E173 serves as the catalytic Proton acceptor. E174, D196, and H379 together coordinate Zn(2+).

Belongs to the peptidase M20B family. The cofactor is Zn(2+).

It localises to the cytoplasm. It carries out the reaction Release of the N-terminal residue from a tripeptide.. Functionally, cleaves the N-terminal amino acid of tripeptides. The sequence is that of Peptidase T from Salmonella enteritidis PT4 (strain P125109).